The sequence spans 155 residues: Transcriptional repressor NrdR (155 aa).

The segment at 3-34 (CPFCGHSNTQVLDTRMSEDGDAVRRRRRCEAC) is a zinc-finger region. Positions 49-139 (PAIVKKNGSR…VYRSFEDVSE (91 aa)) constitute an ATP-cone domain.

The protein belongs to the NrdR family. The cofactor is Zn(2+).

Negatively regulates transcription of bacterial ribonucleotide reductase nrd genes and operons by binding to NrdR-boxes. The chain is Transcriptional repressor NrdR from Cupriavidus necator (strain ATCC 17699 / DSM 428 / KCTC 22496 / NCIMB 10442 / H16 / Stanier 337) (Ralstonia eutropha).